The primary structure comprises 245 residues: GDSL esterase/lipase At4g16220 (245 aa).

A signal peptide spans 1–24; the sequence is MSSLVSRCQVIALLVLFFFGVCLA. Catalysis depends on Ser37, which acts as the Nucleophile.

The protein belongs to the 'GDSL' lipolytic enzyme family.

The protein resides in the secreted. This Arabidopsis thaliana (Mouse-ear cress) protein is GDSL esterase/lipase At4g16220.